Consider the following 132-residue polypeptide: Bombinin-like peptides (132 aa).

An N-terminal signal peptide occupies residues 1–18; the sequence is MNFKYIIAVSFLIASAYA. The propeptide occupies 19 to 42; the sequence is RSEEYDIQSLSQRDVLEEESLRKI. The residue at position 68 (phenylalanine 68) is a Phenylalanine amide. The propeptide occupies 72–112; that stretch reads TAEDHEVMKRLEAAMRDLDSLDYPEEASERETRGFNQEEKE. Leucine 131 carries the leucine amide modification.

The protein belongs to the bombinin family. Expressed by the skin glands.

It is found in the secreted. Has antimicrobial activity against Gram-negative bacterium E.coli (MIC=26.3 uM), Gram-positive bacterium S.aureus (MIC=26.3 uM) and yeast C.albicans (MIC=52.5 uM). Has moderate hemolytic activity towards human erythrocytes at a concentration of 52.2 uM. Its function is as follows. Has no antimicrobial activity at concentrations up to 161 uM. Has moderate hemolytic activity towards human erythrocytes at a concentration of 40.3 uM. In Bombina orientalis (Oriental fire-bellied toad), this protein is Bombinin-like peptides.